The primary structure comprises 377 residues: Chaperone protein DnaJ (377 aa).

Residues 5–70 (DYYEVLGVAK…QKRAAYDRYG (66 aa)) enclose the J domain. The CR-type zinc-finger motif lies at 137–215 (GFDTEIRVPS…CDGVGRTRRN (79 aa)). 8 residues coordinate Zn(2+): Cys150, Cys153, Cys167, Cys170, Cys189, Cys192, Cys203, and Cys206. CXXCXGXG motif repeat units follow at residues 150-157 (CDTCHGSG), 167-174 (CRTCGGSG), 189-196 (CPTCHGTG), and 203-210 (CPSCDGVG).

The protein belongs to the DnaJ family. As to quaternary structure, homodimer. Zn(2+) serves as cofactor.

It localises to the cytoplasm. Its function is as follows. Participates actively in the response to hyperosmotic and heat shock by preventing the aggregation of stress-denatured proteins and by disaggregating proteins, also in an autonomous, DnaK-independent fashion. Unfolded proteins bind initially to DnaJ; upon interaction with the DnaJ-bound protein, DnaK hydrolyzes its bound ATP, resulting in the formation of a stable complex. GrpE releases ADP from DnaK; ATP binding to DnaK triggers the release of the substrate protein, thus completing the reaction cycle. Several rounds of ATP-dependent interactions between DnaJ, DnaK and GrpE are required for fully efficient folding. Also involved, together with DnaK and GrpE, in the DNA replication of plasmids through activation of initiation proteins. This chain is Chaperone protein DnaJ, found in Bordetella parapertussis (strain 12822 / ATCC BAA-587 / NCTC 13253).